We begin with the raw amino-acid sequence, 271 residues long: Mannosyl-3-phosphoglycerate phosphatase (271 aa).

D13 serves as the catalytic Nucleophile. Mg(2+)-binding residues include D13, D15, and D214.

Belongs to the HAD-like hydrolase superfamily. MPGP family. It depends on Mg(2+) as a cofactor.

The protein localises to the cytoplasm. The enzyme catalyses 2-O-(alpha-D-mannosyl)-3-phosphoglycerate + H2O = (2R)-2-O-(alpha-D-mannosyl)-glycerate + phosphate. The sequence is that of Mannosyl-3-phosphoglycerate phosphatase from Escherichia coli O45:K1 (strain S88 / ExPEC).